Reading from the N-terminus, the 444-residue chain is Cholecystokinin receptor type A (444 aa).

Residues 1–56 (MSHSPARQHLVESSRMDVVDSLLMNGSNITPPCELGLENETLFCLDQPQPSKEWQS) lie on the Extracellular side of the membrane. N-linked (GlcNAc...) asparagine glycans are attached at residues asparagine 25 and asparagine 39. A disulfide bridge links cysteine 33 with cysteine 44. A helical membrane pass occupies residues 57 to 82 (ALQILLYSIIFLLSVLGNTLVITVLI). The Cytoplasmic portion of the chain corresponds to 83 to 92 (RNKRMRTVTN). The chain crosses the membrane as a helical span at residues 93 to 119 (IFLLSLAVSDLMLCLFCMPFNLIPNLL). Topologically, residues 120–130 (KDFIFGSAVCK) are extracellular. Cysteine 129 and cysteine 211 are joined by a disulfide. Residues 131 to 152 (TTTYFMGTSVSVSTFNLVAISL) traverse the membrane as a helical segment. Residues 153–172 (ERYGAICRPLQSRVWQTKSH) lie on the Cytoplasmic side of the membrane. Residues 173–193 (ALKVIAATWCLSFTIMTPYPI) form a helical membrane-spanning segment. The Extracellular segment spans residues 194-225 (YSNLVPFTKNNNQTANMCRFLLPSDAMQQSWQ). The N-linked (GlcNAc...) asparagine glycan is linked to asparagine 205. The chain crosses the membrane as a helical span at residues 226-249 (TFLLLILFLLPGIVMVVAYGLISL). Over 250 to 329 (ELYQGIKFDA…NLIAKKRVIR (80 aa)) the chain is Cytoplasmic. Positions 263 to 288 (KSAKEKKPSTGSSTRYEDSDGCYLQK) are disordered. A helical transmembrane segment spans residues 330 to 350 (MLIVIVVLFFLCWMPIFSANA). Residues 351 to 365 (WRAYDTVSAEKHLSG) lie on the Extracellular side of the membrane. A helical transmembrane segment spans residues 366–389 (TPISFILLLSYTSSCVNPIIYCFM). The Cytoplasmic portion of the chain corresponds to 390-444 (NKRFRLGFMATFPCCPNPGPPGVRGEVGEEEDGRTIRALLSRYSYSHMSTSAPPP). Cysteine 403 is lipidated: S-palmitoyl cysteine.

Belongs to the G-protein coupled receptor 1 family. Pancreas and brain. Also expressed in the gastrointestinal system and vagus nerve.

It localises to the cell membrane. Its function is as follows. Receptor for cholecystokinin. Mediates pancreatic growth and enzyme secretion, smooth muscle contraction of the gall bladder and stomach. Has a 1000-fold higher affinity for CCK rather than for gastrin. It modulates feeding and dopamine-induced behavior in the central and peripheral nervous system. This receptor mediates its action by association with G proteins that activate a phosphatidylinositol-calcium second messenger system. The polypeptide is Cholecystokinin receptor type A (Cckar) (Rattus norvegicus (Rat)).